We begin with the raw amino-acid sequence, 614 residues long: Fimbrin (614 aa).

2 consecutive EF-hand domains span residues 16–50 and 51–86; these read EEIL…DSKK and GSYD…LKKG. Ca(2+) is bound by residues D29, D31, Y35, T40, D66, S68, R70, and D75. Actin-binding stretches follow at residues 98-368 and 369-614; these read TIKG…GLEP and LNEE…LMAV. 4 Calponin-homology (CH) domains span residues 112–233, 261–364, 385–495, and 508–614; these read EEER…RRGL, LPPE…NTHP, EREA…RMNI, and TLSD…LMAV.

It localises to the cytoplasm. The protein localises to the cytoskeleton. Its subcellular location is the actin patch. In terms of biological role, binds to actin, and functionally associates with actin structures involved in the development and maintenance of cell polarity. Plays a role in cytokinesis. Plays important roles in mating and in spore formation. In Schizosaccharomyces pombe (strain 972 / ATCC 24843) (Fission yeast), this protein is Fimbrin (fim1).